The following is a 475-amino-acid chain: Ribulose bisphosphate carboxylase large chain (475 aa).

The propeptide occupies 1–2 (MS). An N-acetylproline modification is found at proline 3. The residue at position 14 (lysine 14) is an N6,N6,N6-trimethyllysine. Asparagine 123 and threonine 173 together coordinate substrate. The active-site Proton acceptor is the lysine 175. Lysine 177 provides a ligand contact to substrate. Lysine 201, aspartate 203, and glutamate 204 together coordinate Mg(2+). Lysine 201 carries the post-translational modification N6-carboxylysine. Histidine 294 (proton acceptor) is an active-site residue. Residues arginine 295, histidine 327, and serine 379 each coordinate substrate.

Belongs to the RuBisCO large chain family. Type I subfamily. Heterohexadecamer of 8 large chains and 8 small chains; disulfide-linked. The disulfide link is formed within the large subunit homodimers. Mg(2+) is required as a cofactor. The disulfide bond which can form in the large chain dimeric partners within the hexadecamer appears to be associated with oxidative stress and protein turnover.

Its subcellular location is the plastid. The protein resides in the chloroplast. It catalyses the reaction 2 (2R)-3-phosphoglycerate + 2 H(+) = D-ribulose 1,5-bisphosphate + CO2 + H2O. The catalysed reaction is D-ribulose 1,5-bisphosphate + O2 = 2-phosphoglycolate + (2R)-3-phosphoglycerate + 2 H(+). Its function is as follows. RuBisCO catalyzes two reactions: the carboxylation of D-ribulose 1,5-bisphosphate, the primary event in carbon dioxide fixation, as well as the oxidative fragmentation of the pentose substrate in the photorespiration process. Both reactions occur simultaneously and in competition at the same active site. The chain is Ribulose bisphosphate carboxylase large chain from Castanea sativa (Sweet chestnut).